Consider the following 29-residue polypeptide: U1-pseudomyrmecitoxin-Pt1 subunit SS1 (29 aa).

The protein belongs to the myrmexin family. In terms of assembly, heterodimer composed of subunit SS1 and subunit LS1 (U1-PSDTX-Pt1b), and heterodimer composed of subunit SS1 and LS2 (U1-PSDTX-Pt1a); disulfide-linked. As to expression, expressed by the venom gland.

The protein resides in the secreted. Functionally, this heterodimer may have anti-inflammatory properties, since the myrmexin complex (composed of 6 SS-LS heterodimers) inhibits carrageenin-induced edema in a dose-dependent manner (after subcutaneous injection into rats). The polypeptide is U1-pseudomyrmecitoxin-Pt1 subunit SS1 (Pseudomyrmex triplarinus (Ant)).